A 211-amino-acid chain; its full sequence is Probable GTP-binding protein EngB (211 aa).

The EngB-type G domain occupies 26 to 200 (SGIEVAFAGR…RQKLDNWFST (175 aa)). GTP is bound by residues 34-41 (GRSNAGKS), 61-65 (GRTQL), 79-82 (DLPG), 146-149 (TKAD), and 179-181 (FSS). Residues serine 41 and threonine 63 each coordinate Mg(2+).

It belongs to the TRAFAC class TrmE-Era-EngA-EngB-Septin-like GTPase superfamily. EngB GTPase family. The cofactor is Mg(2+).

Necessary for normal cell division and for the maintenance of normal septation. In Pectobacterium carotovorum subsp. carotovorum (strain PC1), this protein is Probable GTP-binding protein EngB.